The primary structure comprises 349 residues: MKFSDIISKLEVTNYSLTQNPNNDPEITGMAAIDEATSGTLSYIEGAKFASFIAKTNASALILPQNEAMQAQAQERGIVWMATPEPRLLFAKAIALFYQPYTPTPEIHPTAVIHPTAKIGNDVYIGPHVVIQPGVEIGNGVIIHPNVVIYPGVKIGDRTILHANCTIEERSQIGADCVIHSGAVIGGEGFGFVPTRTGWYKMEQSGYVVLEDRVDIGCNTTIDRPSVGETRVGYDTKIDNLVQIAHGCQIGAGCAIAAQTGMAGGVKLGNRVILAGQVGIANQAKMGDGSTASAQTGILHDVKPGEVVSGTPAIPHKMYLKIAALYSRLPDMYQAFRQSQRQLEEEGKR.

His-246 acts as the Proton acceptor in catalysis.

This sequence belongs to the transferase hexapeptide repeat family. LpxD subfamily. In terms of assembly, homotrimer.

It carries out the reaction a UDP-3-O-[(3R)-3-hydroxyacyl]-alpha-D-glucosamine + a (3R)-hydroxyacyl-[ACP] = a UDP-2-N,3-O-bis[(3R)-3-hydroxyacyl]-alpha-D-glucosamine + holo-[ACP] + H(+). It participates in bacterial outer membrane biogenesis; LPS lipid A biosynthesis. In terms of biological role, catalyzes the N-acylation of UDP-3-O-acylglucosamine using 3-hydroxyacyl-ACP as the acyl donor. Is involved in the biosynthesis of lipid A, a phosphorylated glycolipid that anchors the lipopolysaccharide to the outer membrane of the cell. The chain is UDP-3-O-acylglucosamine N-acyltransferase from Trichormus variabilis (strain ATCC 29413 / PCC 7937) (Anabaena variabilis).